We begin with the raw amino-acid sequence, 90 residues long: Probable Fe(2+)-trafficking protein (90 aa).

The protein belongs to the Fe(2+)-trafficking protein family.

Functionally, could be a mediator in iron transactions between iron acquisition and iron-requiring processes, such as synthesis and/or repair of Fe-S clusters in biosynthetic enzymes. This is Probable Fe(2+)-trafficking protein from Photobacterium profundum (strain SS9).